Reading from the N-terminus, the 447-residue chain is N-succinylarginine dihydrolase (447 aa).

Residues 19–28 (AGLSFGNEAS), N110, and 137–138 (HR) contribute to the substrate site. Residue E174 is part of the active site. R212 contacts substrate. H248 is a catalytic residue. Substrate-binding residues include D250 and N359. C365 functions as the Nucleophile in the catalytic mechanism.

The protein belongs to the succinylarginine dihydrolase family. As to quaternary structure, homodimer.

It catalyses the reaction N(2)-succinyl-L-arginine + 2 H2O + 2 H(+) = N(2)-succinyl-L-ornithine + 2 NH4(+) + CO2. It functions in the pathway amino-acid degradation; L-arginine degradation via AST pathway; L-glutamate and succinate from L-arginine: step 2/5. In terms of biological role, catalyzes the hydrolysis of N(2)-succinylarginine into N(2)-succinylornithine, ammonia and CO(2). The sequence is that of N-succinylarginine dihydrolase from Salmonella paratyphi A (strain ATCC 9150 / SARB42).